Here is a 207-residue protein sequence, read N- to C-terminus: Glutathione S-transferase 3 (207 aa).

Residues 2–79 (VHYKLTYFNA…YLARKFGFVG (78 aa)) enclose the GST N-terminal domain. Glutathione is bound by residues tyrosine 8, lysine 43, 49–51 (GQV), and 63–64 (QS). The 127-residue stretch at 81–207 (TAEEELQADE…WLAKRPETRF (127 aa)) folds into the GST C-terminal domain.

The protein belongs to the GST superfamily. Sigma family.

It catalyses the reaction RX + glutathione = an S-substituted glutathione + a halide anion + H(+). In terms of biological role, conjugation of reduced glutathione to a wide number of exogenous and endogenous hydrophobic electrophiles. The sequence is that of Glutathione S-transferase 3 (gst-3) from Caenorhabditis elegans.